The primary structure comprises 456 residues: Gustatory receptor for sugar taste 64a (456 aa).

A disordered region spans residues 1 to 30; sequence MKGPNLNFRKTPSKDNGVKQVESLARPETP. Over 1–91 the chain is Cytoplasmic; sequence MKGPNLNFRK…RESNPRRVRF (91 aa). Residues 92–114 form a helical membrane-spanning segment; the sequence is AYKSIPMFVTLIFMIATSILFLS. The Extracellular segment spans residues 115–128; that stretch reads MFTHLLKIGITAKN. Residues 129–150 traverse the membrane as a helical segment; sequence FVGLVFFGCVLSAYVVFIRLAK. Gly-131 contributes to the sucrose binding site. At 151 to 182 the chain is on the cytoplasmic side; the sequence is KWPAVVRIWTRTEIPFTKPPYEIPKRNLSRRV. Residues 183–205 traverse the membrane as a helical segment; sequence QLAALAIIGLSLGEHALYQVSAI. The sucrose site is built by Glu-196, His-197, and Tyr-234. D-maltose contacts are provided by Glu-196, His-197, Tyr-234, Asn-253, and Thr-257. Residues 206 to 245 are Extracellular-facing; the sequence is LSYTRRIQMCANITTVPSFNNYMQTNYDYVFQLLPYSPII. A helical membrane pass occupies residues 246–271; the sequence is AVLILLINGACTFVWNYMDLFIMMIS. Residue Thr-257 participates in sucrose binding. Residues 272 to 318 are Cytoplasmic-facing; that stretch reads KGLSYRFEQITTRIRKLEHEEVCESVFIQIREHYVKMCELLEFVDSA. The chain crosses the membrane as a helical span at residues 319–342; that stretch reads MSSLILLSCVNNLYFVCYQLLNVF. The Extracellular segment spans residues 343–350; the sequence is NKLRWPIN. Residues 351–373 form a helical membrane-spanning segment; it reads YIYFWYSLLYLIGRTAFVFLTAA. Tyr-353 serves as a coordination point for sucrose. D-maltose is bound at residue Tyr-353. Residues 374 to 421 are Cytoplasmic-facing; it reads DINEESKRGLGVLRRVSSRSWCVEVERLIFQMTTQTVALSGKKFYFLT. Residues 422 to 441 traverse the membrane as a helical segment; that stretch reads RRLLFGMAGTIVTYELVLLQ. The Extracellular segment spans residues 442–456; that stretch reads FDEPNRRKGLQPLCA.

Belongs to the insect chemoreceptor superfamily. Gustatory receptor (GR) family. Gr5a subfamily. Homotetramer. As to expression, expressed in Gr5a-expressing sugar-sensing cells.

Its subcellular location is the cell membrane. Functionally, one of the few identified sugar gustatory receptors identified so far and which promotes the starvation-induced increase of feeding motivation. Required in combination with Gr64f to detect sucrose, maltose, and glucose. The protein is Gustatory receptor for sugar taste 64a (Gr64a) of Drosophila melanogaster (Fruit fly).